We begin with the raw amino-acid sequence, 296 residues long: Cytidine deaminase (296 aa).

2 CMP/dCMP-type deaminase domains span residues 47–167 (TEAE…FGPK) and 186–296 (DSSD…VDPV). Position 88–90 (88–90 (NLE)) interacts with substrate. Zn(2+) is bound at residue histidine 101. Glutamate 103 functions as the Proton donor in the catalytic mechanism. Positions 128 and 131 each coordinate Zn(2+).

The protein belongs to the cytidine and deoxycytidylate deaminase family. As to quaternary structure, homodimer. Zn(2+) is required as a cofactor.

The enzyme catalyses cytidine + H2O + H(+) = uridine + NH4(+). The catalysed reaction is 2'-deoxycytidine + H2O + H(+) = 2'-deoxyuridine + NH4(+). Its function is as follows. This enzyme scavenges exogenous and endogenous cytidine and 2'-deoxycytidine for UMP synthesis. The polypeptide is Cytidine deaminase (Shewanella sp. (strain MR-4)).